A 1070-amino-acid polypeptide reads, in one-letter code: Carbamoyl phosphate synthase large chain (1070 aa).

Positions 1 to 401 (MPKRDDIKTI…ALLKAVRSLE (401 aa)) are carboxyphosphate synthetic domain. ATP-binding residues include Arg-129, Arg-169, Gly-175, Gly-176, Lys-208, Ile-210, Glu-215, Gly-241, Ile-242, His-243, Gln-284, and Glu-298. Residues 133-327 (RDLMNELGEP…IAKLAAKIAV (195 aa)) form the ATP-grasp 1 domain. Mg(2+) contacts are provided by Gln-284, Glu-298, and Asn-300. Mn(2+) is bound by residues Gln-284, Glu-298, and Asn-300. Residues 402-546 (IGADHLLLEE…YSTYEDENES (145 aa)) form an oligomerization domain region. The tract at residues 547 to 929 (IRSSKESVIV…ALYKGFVASG (383 aa)) is carbamoyl phosphate synthetic domain. The ATP-grasp 2 domain maps to 671-861 (EKALEILQIP…MANVATRVIL (191 aa)). Positions 707, 746, 748, 752, 777, 778, 779, 780, 820, and 832 each coordinate ATP. 3 residues coordinate Mg(2+): Gln-820, Glu-832, and Asn-834. Gln-820, Glu-832, and Asn-834 together coordinate Mn(2+). An MGS-like domain is found at 930-1070 (TTMHDYGTVL…SEVKQPKARV (141 aa)). The allosteric domain stretch occupies residues 930-1070 (TTMHDYGTVL…SEVKQPKARV (141 aa)).

It belongs to the CarB family. As to quaternary structure, composed of two chains; the small (or glutamine) chain promotes the hydrolysis of glutamine to ammonia, which is used by the large (or ammonia) chain to synthesize carbamoyl phosphate. Tetramer of heterodimers (alpha,beta)4. The cofactor is Mg(2+). Requires Mn(2+) as cofactor.

The enzyme catalyses hydrogencarbonate + L-glutamine + 2 ATP + H2O = carbamoyl phosphate + L-glutamate + 2 ADP + phosphate + 2 H(+). The catalysed reaction is hydrogencarbonate + NH4(+) + 2 ATP = carbamoyl phosphate + 2 ADP + phosphate + 2 H(+). Its pathway is amino-acid biosynthesis; L-arginine biosynthesis; carbamoyl phosphate from bicarbonate: step 1/1. It participates in pyrimidine metabolism; UMP biosynthesis via de novo pathway; (S)-dihydroorotate from bicarbonate: step 1/3. Functionally, large subunit of the glutamine-dependent carbamoyl phosphate synthetase (CPSase). CPSase catalyzes the formation of carbamoyl phosphate from the ammonia moiety of glutamine, carbonate, and phosphate donated by ATP, constituting the first step of 2 biosynthetic pathways, one leading to arginine and/or urea and the other to pyrimidine nucleotides. The large subunit (synthetase) binds the substrates ammonia (free or transferred from glutamine from the small subunit), hydrogencarbonate and ATP and carries out an ATP-coupled ligase reaction, activating hydrogencarbonate by forming carboxy phosphate which reacts with ammonia to form carbamoyl phosphate. This Listeria innocua serovar 6a (strain ATCC BAA-680 / CLIP 11262) protein is Carbamoyl phosphate synthase large chain.